The primary structure comprises 259 residues: Phosphatidylglycerol--prolipoprotein diacylglyceryl transferase (259 aa).

The next 7 helical transmembrane spans lie at 9–29 (LGPL…ILAV), 48–68 (DFIL…YVIF), 83–103 (IWHG…VLFI), 114–133 (DFLD…GRWG), 167–187 (TPTF…IMIL), 197–217 (GEVA…IEGM), and 227–247 (LRVS…LIVI). Arginine 131 lines the a 1,2-diacyl-sn-glycero-3-phospho-(1'-sn-glycerol) pocket.

It belongs to the Lgt family.

Its subcellular location is the cell membrane. It catalyses the reaction L-cysteinyl-[prolipoprotein] + a 1,2-diacyl-sn-glycero-3-phospho-(1'-sn-glycerol) = an S-1,2-diacyl-sn-glyceryl-L-cysteinyl-[prolipoprotein] + sn-glycerol 1-phosphate + H(+). It functions in the pathway protein modification; lipoprotein biosynthesis (diacylglyceryl transfer). In terms of biological role, catalyzes the transfer of the diacylglyceryl group from phosphatidylglycerol to the sulfhydryl group of the N-terminal cysteine of a prolipoprotein, the first step in the formation of mature lipoproteins. In Streptococcus mutans serotype c (strain ATCC 700610 / UA159), this protein is Phosphatidylglycerol--prolipoprotein diacylglyceryl transferase.